The sequence spans 459 residues: Bifunctional protein GlmU (459 aa).

The tract at residues 1–230 (MVKRYAVILA…FEETIGVNDR (230 aa)) is pyrophosphorylase. Residues 9 to 12 (LAAG), Lys-23, Gln-73, and 78 to 79 (GT) contribute to the UDP-N-acetyl-alpha-D-glucosamine site. A Mg(2+)-binding site is contributed by Asp-103. Residues Gly-140, Glu-155, Asn-170, and Asn-228 each contribute to the UDP-N-acetyl-alpha-D-glucosamine site. A Mg(2+)-binding site is contributed by Asn-228. A linker region spans residues 231 to 251 (VALAEAEKIMRERICRKHMMN). The interval 252–459 (GVTIIDPAHT…VDRLSIKKNS (208 aa)) is N-acetyltransferase. Positions 333 and 351 each coordinate UDP-N-acetyl-alpha-D-glucosamine. His-363 (proton acceptor) is an active-site residue. UDP-N-acetyl-alpha-D-glucosamine is bound by residues Tyr-366 and Asn-377. Acetyl-CoA is bound by residues 386–387 (NY), Ala-423, and Arg-440.

It in the N-terminal section; belongs to the N-acetylglucosamine-1-phosphate uridyltransferase family. In the C-terminal section; belongs to the transferase hexapeptide repeat family. In terms of assembly, homotrimer. Mg(2+) serves as cofactor.

It localises to the cytoplasm. It catalyses the reaction alpha-D-glucosamine 1-phosphate + acetyl-CoA = N-acetyl-alpha-D-glucosamine 1-phosphate + CoA + H(+). It carries out the reaction N-acetyl-alpha-D-glucosamine 1-phosphate + UTP + H(+) = UDP-N-acetyl-alpha-D-glucosamine + diphosphate. It participates in nucleotide-sugar biosynthesis; UDP-N-acetyl-alpha-D-glucosamine biosynthesis; N-acetyl-alpha-D-glucosamine 1-phosphate from alpha-D-glucosamine 6-phosphate (route II): step 2/2. It functions in the pathway nucleotide-sugar biosynthesis; UDP-N-acetyl-alpha-D-glucosamine biosynthesis; UDP-N-acetyl-alpha-D-glucosamine from N-acetyl-alpha-D-glucosamine 1-phosphate: step 1/1. The protein operates within bacterial outer membrane biogenesis; LPS lipid A biosynthesis. Its function is as follows. Catalyzes the last two sequential reactions in the de novo biosynthetic pathway for UDP-N-acetylglucosamine (UDP-GlcNAc). The C-terminal domain catalyzes the transfer of acetyl group from acetyl coenzyme A to glucosamine-1-phosphate (GlcN-1-P) to produce N-acetylglucosamine-1-phosphate (GlcNAc-1-P), which is converted into UDP-GlcNAc by the transfer of uridine 5-monophosphate (from uridine 5-triphosphate), a reaction catalyzed by the N-terminal domain. This Geobacillus sp. (strain WCH70) protein is Bifunctional protein GlmU.